The following is a 129-amino-acid chain: RxLR effector protein SFI6 (129 aa).

The N-terminal stretch at 1 to 16 is a signal peptide; the sequence is MTLVVLATGLLASGTA. A RxLR-dEER motif is present at residues 42–64; it reads RFLRSHQITDDKVEINEHGEEER.

This sequence belongs to the RxLR effector family.

The protein resides in the secreted. The protein localises to the host cytoplasm. Its subcellular location is the host cell membrane. In terms of biological role, effector that suppresses flg22-induced post-translational MAP kinase activation in tomato but not in Arabidopsis. The perception of highly conserved pathogen- or microbe-associated molecular patterns (PAMPs/MAMPs), such as flg22, triggers converging signaling pathways recruiting MAP kinase cascades and inducing transcriptional re-programming, yielding a generic antimicrobial response. The sequence is that of RxLR effector protein SFI6 from Phytophthora infestans (strain T30-4) (Potato late blight agent).